The sequence spans 343 residues: Holliday junction branch migration complex subunit RuvB (343 aa).

The tract at residues 1-181 (MDRIIDTAAT…FGIVQRLEFY (181 aa)) is large ATPase domain (RuvB-L). ATP-binding positions include Ile-20, Arg-21, Gly-62, Lys-65, Thr-66, Thr-67, 128 to 130 (EDF), Arg-171, Tyr-181, and Arg-218. Mg(2+) is bound at residue Thr-66. The segment at 182-252 (SPEDLARIVR…VAQAAMQMLK (71 aa)) is small ATPAse domain (RuvB-S). Residues 255 to 343 (QGGFDELDRR…SAFTDPEDLF (89 aa)) are head domain (RuvB-H). DNA contacts are provided by Arg-291, Arg-310, and Arg-315.

The protein belongs to the RuvB family. Homohexamer. Forms an RuvA(8)-RuvB(12)-Holliday junction (HJ) complex. HJ DNA is sandwiched between 2 RuvA tetramers; dsDNA enters through RuvA and exits via RuvB. An RuvB hexamer assembles on each DNA strand where it exits the tetramer. Each RuvB hexamer is contacted by two RuvA subunits (via domain III) on 2 adjacent RuvB subunits; this complex drives branch migration. In the full resolvosome a probable DNA-RuvA(4)-RuvB(12)-RuvC(2) complex forms which resolves the HJ.

The protein resides in the cytoplasm. It catalyses the reaction ATP + H2O = ADP + phosphate + H(+). Its function is as follows. The RuvA-RuvB-RuvC complex processes Holliday junction (HJ) DNA during genetic recombination and DNA repair, while the RuvA-RuvB complex plays an important role in the rescue of blocked DNA replication forks via replication fork reversal (RFR). RuvA specifically binds to HJ cruciform DNA, conferring on it an open structure. The RuvB hexamer acts as an ATP-dependent pump, pulling dsDNA into and through the RuvAB complex. RuvB forms 2 homohexamers on either side of HJ DNA bound by 1 or 2 RuvA tetramers; 4 subunits per hexamer contact DNA at a time. Coordinated motions by a converter formed by DNA-disengaged RuvB subunits stimulates ATP hydrolysis and nucleotide exchange. Immobilization of the converter enables RuvB to convert the ATP-contained energy into a lever motion, pulling 2 nucleotides of DNA out of the RuvA tetramer per ATP hydrolyzed, thus driving DNA branch migration. The RuvB motors rotate together with the DNA substrate, which together with the progressing nucleotide cycle form the mechanistic basis for DNA recombination by continuous HJ branch migration. Branch migration allows RuvC to scan DNA until it finds its consensus sequence, where it cleaves and resolves cruciform DNA. This is Holliday junction branch migration complex subunit RuvB from Xylella fastidiosa (strain 9a5c).